The following is a 296-amino-acid chain: uncharacterized protein (296 aa).

An HTH lysR-type domain is found at Met-1–Thr-60. A DNA-binding region (H-T-H motif) is located at residues Phe-20–Ser-39.

This sequence belongs to the LysR transcriptional regulatory family.

This is an uncharacterized protein from Methanocaldococcus jannaschii (strain ATCC 43067 / DSM 2661 / JAL-1 / JCM 10045 / NBRC 100440) (Methanococcus jannaschii).